Reading from the N-terminus, the 117-residue chain is MDMRVPAQLLGLLLLWLSGARCDIQMTQSPSSLSASVGDRVTITCQASQDISNYLNWYQQKPGKAPKLLIYDASNLETGVPSRFSGSGSGTDFTFTISSLQPEDIATYYCQQYDNLP.

The N-terminal stretch at 1 to 22 is a signal peptide; sequence MDMRVPAQLLGLLLLWLSGARC. The tract at residues 23 to 45 is framework-1; the sequence is DIQMTQSPSSLSASVGDRVTITC. The Ig-like domain occupies 24–117; that stretch reads IQMTQSPSSL…YYCQQYDNLP (94 aa). A disulfide bond links Cys-45 and Cys-110. The segment at 46 to 56 is complementarity-determining-1; the sequence is QASQDISNYLN. The tract at residues 57 to 71 is framework-2; it reads WYQQKPGKAPKLLIY. The interval 72–78 is complementarity-determining-2; it reads DASNLET. The interval 79 to 110 is framework-3; it reads GVPSRFSGSGSGTDFTFTISSLQPEDIATYYC. The tract at residues 111–117 is complementarity-determining-3; the sequence is QQYDNLP.

As to quaternary structure, immunoglobulins are composed of two identical heavy chains and two identical light chains; disulfide-linked.

It is found in the secreted. Its subcellular location is the cell membrane. V region of the variable domain of immunoglobulin light chains that participates in the antigen recognition. Immunoglobulins, also known as antibodies, are membrane-bound or secreted glycoproteins produced by B lymphocytes. In the recognition phase of humoral immunity, the membrane-bound immunoglobulins serve as receptors which, upon binding of a specific antigen, trigger the clonal expansion and differentiation of B lymphocytes into immunoglobulins-secreting plasma cells. Secreted immunoglobulins mediate the effector phase of humoral immunity, which results in the elimination of bound antigens. The antigen binding site is formed by the variable domain of one heavy chain, together with that of its associated light chain. Thus, each immunoglobulin has two antigen binding sites with remarkable affinity for a particular antigen. The variable domains are assembled by a process called V-(D)-J rearrangement and can then be subjected to somatic hypermutations which, after exposure to antigen and selection, allow affinity maturation for a particular antigen. In Homo sapiens (Human), this protein is Immunoglobulin kappa variable 1-33.